We begin with the raw amino-acid sequence, 409 residues long: tRNA(Met) cytidine acetate ligase (409 aa).

ATP contacts are provided by residues 7-20, Gly-102, Asn-169, and Arg-194; that span reads VVEYNPMHNGHLHH.

It belongs to the TmcAL family.

Its subcellular location is the cytoplasm. It carries out the reaction cytidine(34) in elongator tRNA(Met) + acetate + ATP = N(4)-acetylcytidine(34) in elongator tRNA(Met) + AMP + diphosphate. In terms of biological role, catalyzes the formation of N(4)-acetylcytidine (ac(4)C) at the wobble position of elongator tRNA(Met), using acetate and ATP as substrates. First activates an acetate ion to form acetyladenylate (Ac-AMP) and then transfers the acetyl group to tRNA to form ac(4)C34. This Clostridium botulinum (strain Loch Maree / Type A3) protein is tRNA(Met) cytidine acetate ligase.